Here is a 371-residue protein sequence, read N- to C-terminus: Probable RNA 3'-terminal phosphate cyclase-like protein (371 aa).

The protein belongs to the RNA 3'-terminal cyclase family. Type 2 subfamily. As to quaternary structure, part of the small subunit (SSU) processome, composed of more than 70 proteins and the RNA chaperone small nucleolar RNA (snoRNA) U3.

It is found in the nucleus. Its subcellular location is the nucleolus. In terms of biological role, part of the small subunit (SSU) processome, first precursor of the small eukaryotic ribosomal subunit. During the assembly of the SSU processome in the nucleolus, many ribosome biogenesis factors, an RNA chaperone and ribosomal proteins associate with the nascent pre-rRNA and work in concert to generate RNA folding, modifications, rearrangements and cleavage as well as targeted degradation of pre-ribosomal RNA by the RNA exosome. Does not have cyclase activity. This is Probable RNA 3'-terminal phosphate cyclase-like protein (rcl1) from Dictyostelium discoideum (Social amoeba).